Reading from the N-terminus, the 329-residue chain is MAAMVDSKPAASVQGTPLLATATLPVFTRGIYSTKRITLETSSPSSPPPPKPLIIVTPAEKGTFNVILFLHGTSLSNKSYSKIFDHIASHGFIVVAPQLYTSIPPPSATNELNSAAEVAEWLPQGLQQNLPENTEANVSLVAVMGHSRGGQTAFALSLRYGFGAVIGLDPVAGTSKTTGLDPSILSFDSFDFSIPVTVIGTGLGGVARCITACAPEGANHEEFFNRCKNSSRAHFVATDYGHMDILDDNPSDVKSWALSKYFCKNGNESRDPMRRCVSGIVVAFLKDFFDGDAEDFRQILKDPSFAPIKLDSVEYIDASSMLTTTHVKV.

The N-terminal 21 residues, 1-21 (MAAMVDSKPAASVQGTPLLAT), are a transit peptide targeting the chloroplast. Residues 145 to 149 (GHSRG) carry the GXSXG motif. Residue serine 147 is the Nucleophile of the active site. Residues aspartate 169 and histidine 242 each act as charge relay system in the active site.

It belongs to the AB hydrolase superfamily. Lipase family.

The protein resides in the plastid. Its subcellular location is the chloroplast. It catalyses the reaction a chlorophyll + H2O = a chlorophyllide + phytol + H(+). It functions in the pathway porphyrin-containing compound metabolism; chlorophyll degradation. Functionally, catalyzes the hydrolysis of ester bond in chlorophyll to yield chlorophyllide and phytol. In Citrus unshiu (Satsuma mandarin), this protein is Chlorophyllase-1, chloroplastic.